Consider the following 357-residue polypeptide: DNA replication and repair protein RecF (357 aa).

30–37 (GANGSGKT) is a binding site for ATP.

The protein belongs to the RecF family.

The protein localises to the cytoplasm. The RecF protein is involved in DNA metabolism; it is required for DNA replication and normal SOS inducibility. RecF binds preferentially to single-stranded, linear DNA. It also seems to bind ATP. This Cronobacter sakazakii (strain ATCC BAA-894) (Enterobacter sakazakii) protein is DNA replication and repair protein RecF.